We begin with the raw amino-acid sequence, 533 residues long: RNA polymerase II-associated factor 1 homolog (533 aa).

The tract at residues 1-23 (MAPTIQTQAQREDGHRPNSHRTL) is disordered. Residue Ser117 is modified to Phosphoserine. Glycyl lysine isopeptide (Lys-Gly) (interchain with G-Cter in SUMO2) cross-links involve residues Lys133 and Lys154. Residues 352 to 400 (KHRDMNEKELEAQEARKAQLENHEPEEEEEEEMETEEKEAGGSDEEQEK) adopt a coiled-coil conformation. Residues 361–374 (LEAQEARKAQLENH) are compositionally biased toward basic and acidic residues. Residues 361–533 (LEAQEARKAQ…DSSEADSDSD (173 aa)) are disordered. Residues 375-398 (EPEEEEEEEMETEEKEAGGSDEEQ) are compositionally biased toward acidic residues. Composition is skewed to basic and acidic residues over residues 399–434 (EKGSSSEKEGSEDERSGSESEREEGDRDEASDKSGS) and 442–453 (DEARAARDKEEI). Ser456 carries the post-translational modification Phosphoserine. The span at 458–470 (ADSEDDADSDDED) shows a compositional bias: acidic residues. 2 stretches are compositionally biased toward low complexity: residues 476–485 (GGSDNDSDSG) and 500–509 (RSASPFPSGS).

The protein belongs to the PAF1 family. In terms of assembly, component of the PAF1 complex, which consists of CDC73, PAF1, LEO1, CTR9, RTF1 and SKIC8. The PAF1 complex interacts with PHF5A. Interacts with POLR2A, TCEA1, SKIC3, KMT2A/MLL1, SUPT5H, RNF20 and RNF40. Interacts with UBE2E1.

Its subcellular location is the nucleus. Functionally, component of the PAF1 complex (PAF1C) which has multiple functions during transcription by RNA polymerase II and is implicated in regulation of development and maintenance of embryonic stem cell pluripotency. PAF1C associates with RNA polymerase II through interaction with POLR2A CTD non-phosphorylated and 'Ser-2'- and 'Ser-5'-phosphorylated forms and is involved in transcriptional elongation, acting both independently and synergistically with TCEA1 and in cooperation with the DSIF complex and HTATSF1. PAF1C is required for transcription of Hox and Wnt target genes. PAF1C is involved in hematopoiesis and stimulates transcriptional activity of KMT2A/MLL1. PAF1C is involved in histone modifications such as ubiquitination of histone H2B and methylation on histone H3 'Lys-4' (H3K4me3). PAF1C recruits the RNF20/40 E3 ubiquitin-protein ligase complex and the E2 enzyme UBE2A or UBE2B to chromatin which mediate monoubiquitination of 'Lys-120' of histone H2B (H2BK120ub1); UB2A/B-mediated H2B ubiquitination is proposed to be coupled to transcription. PAF1C is involved in mRNA 3' end formation probably through association with cleavage and poly(A) factors. Connects PAF1C with the RNF20/40 E3 ubiquitin-protein ligase complex. Involved in polyadenylation of mRNA precursors. The polypeptide is RNA polymerase II-associated factor 1 homolog (PAF1) (Pongo abelii (Sumatran orangutan)).